A 245-amino-acid chain; its full sequence is 1-(5-phosphoribosyl)-5-[(5-phosphoribosylamino)methylideneamino] imidazole-4-carboxamide isomerase (245 aa).

Asp7 functions as the Proton acceptor in the catalytic mechanism. The Proton donor role is filled by Asp129.

The protein belongs to the HisA/HisF family.

It is found in the cytoplasm. It carries out the reaction 1-(5-phospho-beta-D-ribosyl)-5-[(5-phospho-beta-D-ribosylamino)methylideneamino]imidazole-4-carboxamide = 5-[(5-phospho-1-deoxy-D-ribulos-1-ylimino)methylamino]-1-(5-phospho-beta-D-ribosyl)imidazole-4-carboxamide. Its pathway is amino-acid biosynthesis; L-histidine biosynthesis; L-histidine from 5-phospho-alpha-D-ribose 1-diphosphate: step 4/9. The chain is 1-(5-phosphoribosyl)-5-[(5-phosphoribosylamino)methylideneamino] imidazole-4-carboxamide isomerase from Shigella boydii serotype 4 (strain Sb227).